Here is a 154-residue protein sequence, read N- to C-terminus: Insulin-like growth factor 1 (154 aa).

A b region spans residues 50-78 (GPETLCGAELVDALQFVCGDRGFYFNKPT). 3 disulfide bridges follow: cysteine 55-cysteine 97, cysteine 67-cysteine 110, and cysteine 96-cysteine 101. Residues 79 to 90 (GYGSSSRRAPQT) are c. An a region spans residues 91-111 (GIVDECCFRSCDLRRLEMYCA). Residues 112–119 (PLKAAKSA) are d. Residues 120–154 (RSVRAQRHTDMPKAQKEVHLKNTSRGSAGNKNYRM) constitute a propeptide, e peptide. The segment at 121–154 (SVRAQRHTDMPKAQKEVHLKNTSRGSAGNKNYRM) is disordered. Positions 126–139 (RHTDMPKAQKEVHL) are enriched in basic and acidic residues. Polar residues predominate over residues 140–154 (KNTSRGSAGNKNYRM).

It belongs to the insulin family. In terms of assembly, forms a ternary complex with IGFR1 and ITGAV:ITGB3. Forms a ternary complex with IGFR1 and ITGA6:ITGB4. Forms a ternary complex with IGFBP3 and ALS.

Its subcellular location is the secreted. In terms of biological role, the insulin-like growth factors, isolated from plasma, are structurally and functionally related to insulin but have a much higher growth-promoting activity. May be a physiological regulator of [1-14C]-2-deoxy-D-glucose (2DG) transport and glycogen synthesis in osteoblasts. Stimulates glucose transport in bone-derived osteoblastic (PyMS) cells and is effective at much lower concentrations than insulin, not only regarding glycogen and DNA synthesis but also with regard to enhancing glucose uptake. May play a role in synapse maturation. Ca(2+)-dependent exocytosis of IGF1 is required for sensory perception of smell in the olfactory bulb. Acts as a ligand for IGF1R. Binds to the alpha subunit of IGF1R, leading to the activation of the intrinsic tyrosine kinase activity which autophosphorylates tyrosine residues in the beta subunit thus initiating a cascade of down-stream signaling events leading to activation of the PI3K-AKT/PKB and the Ras-MAPK pathways. Binds to integrins ITGAV:ITGB3 and ITGA6:ITGB4. Its binding to integrins and subsequent ternary complex formation with integrins and IGFR1 are essential for IGF1 signaling. Induces the phosphorylation and activation of IGFR1, MAPK3/ERK1, MAPK1/ERK2 and AKT1. As part of the MAPK/ERK signaling pathway, acts as a negative regulator of apoptosis in cardiomyocytes via promotion of STUB1/CHIP-mediated ubiquitination and degradation of ICER-type isoforms of CREM. This chain is Insulin-like growth factor 1, found in Ovis aries (Sheep).